The chain runs to 431 residues: Tol-Pal system protein TolB (431 aa).

A signal peptide spans 1 to 26; sequence MSLMTKLGFRALVASCLIAAGSAANA. Residues 411–431 are disordered; that stretch reads PQILSVQGGSVREPSWGPFMQ.

This sequence belongs to the TolB family. As to quaternary structure, the Tol-Pal system is composed of five core proteins: the inner membrane proteins TolA, TolQ and TolR, the periplasmic protein TolB and the outer membrane protein Pal. They form a network linking the inner and outer membranes and the peptidoglycan layer.

Its subcellular location is the periplasm. Its function is as follows. Part of the Tol-Pal system, which plays a role in outer membrane invagination during cell division and is important for maintaining outer membrane integrity. The chain is Tol-Pal system protein TolB from Burkholderia multivorans (strain ATCC 17616 / 249).